The sequence spans 760 residues: MGLPALEFSECCLDSPQFRERLRSHEAELEKTNKFIKELIKDGKSLIAALKNLSSAKRKFADSLNEFKFRCIGDAETDDEICIAKSLQEFATVLRNLEDERMRMIENASEVLITPLEKFRKEQIGAAKDAKKKYDKETEKYCGVLEKHLNLSSKKKESQLQEADSQVDLVRQHFYEVSLEYVFKVQEVQERKMFEFVEPLLAFLQGLFTFYHHGYELAKDFSDFKTELTISIQNTRNRFEGTRSEVESLMKKMKENPHEHKNISPYTMEGYLYVQEKRHFGTSWVKHYCTYQRESKRITMVPFDQKSGGKGGEDEAVILKSCTRRKTDSIEKRFCFDVEAVDRPGVITMQALSEEDRRLWMEAMDGREPVYNSNKDNQSEGTAQLDSIGFSIIKKCIHAVETRGINEQGLYRIVGVNSRVQKLLSILMDPKTATETETEICAEWEIKTITSALKTYLRMLPGPLMMYQFQRSFIKAAKLENQESRVSEIHSLVHRLPEKNRQMLHLLMNHLAKVADNHKQNLMTVANLGVVFGPTLLRPQEETVAAIMDIKFQNIVIEILIENHEKIFNTVPETPPSNSQLLLSRKKSTDSKPPSCSERPLTLFHTAQPNEKQESRNSIINSSLESVISSNANSFLNSNSAPQSNLNSSDLELEVIKPNRPNSLPQNPSPTSPLSPSWPMFSAPSSPMPTSSTSSDSSPISSPLRKARALYACKAEHDSELSFTAGTVFDNVHPSQEPGWLEGTLNGKTGLIPENYVEFL.

In terms of domain architecture, BAR spans 7 to 262 (EFSECCLDSP…MKENPHEHKN (256 aa)). Positions 265–369 (PYTMEGYLYV…WMEAMDGREP (105 aa)) constitute a PH domain. A Rho-GAP domain is found at 383-568 (AQLDSIGFSI…ILIENHEKIF (186 aa)). 2 disordered regions span residues 571 to 617 (VPET…ESRN) and 658 to 701 (PNRP…SPIS). Positions 605–617 (HTAQPNEKQESRN) are enriched in polar residues. Residues 674-701 (LSPSWPMFSAPSSPMPTSSTSSDSSPIS) show a composition bias toward low complexity. One can recognise an SH3 domain in the interval 702–760 (SPLRKARALYACKAEHDSELSFTAGTVFDNVHPSQEPGWLEGTLNGKTGLIPENYVEFL).

Binds to the C-terminus of PTK2/FAK1. As to expression, detected in embryonic brain and liver, and at low levels in embryonic eye, heart, lung, intestine and skeletal muscle.

It localises to the cell junction. It is found in the focal adhesion. Its subcellular location is the cytoplasm. The protein localises to the cytoskeleton. The protein resides in the endosome membrane. Functionally, GTPase-activating protein for RHOA and CDC42. May be involved in the regulation of neosynthesized protein export through a Rab-endososomal dependent export route. In Gallus gallus (Chicken), this protein is Rho GTPase-activating protein 26 (ARHGAP26).